The chain runs to 223 residues: GTP-binding nuclear protein Ran (223 aa).

The 165-residue stretch at 8–172 (VVAEFKLVLV…LWILRKLTGD (165 aa)) folds into the Small GTPase Ran-type domain. 19 to 26 (DGGVGKTT) contributes to the GTP binding site. A switch-I region spans residues 38–46 (KRYIATQGV). Residues Gly69, 123 to 126 (NKVD), and 151 to 153 (SAK) each bind GTP. Positions 69-85 (GQEKLGGLREGYYIGAD) are switch-II.

This sequence belongs to the small GTPase superfamily. Ran family. Monomer. Found in a nuclear export complex with RanGTP, exportin and pre-miRNA.

The protein resides in the nucleus. Functionally, GTP-binding protein involved in nucleocytoplasmic transport. Required for the import of protein into the nucleus and also for RNA export. Involved in chromatin condensation and control of cell cycle. The polypeptide is GTP-binding nuclear protein Ran (Tetrahymena pyriformis).